Consider the following 125-residue polypeptide: Histone H2A (125 aa).

Residues 1–18 (MSGRGKGGKVKAKAKSRS) show a composition bias toward basic residues. Residues 1–21 (MSGRGKGGKVKAKAKSRSSRA) form a disordered region. Serine 2 is modified (N-acetylserine). Serine 2 is modified (phosphoserine). A Glycyl lysine isopeptide (Lys-Gly) (interchain with G-Cter in ubiquitin) cross-link involves residue lysine 119.

This sequence belongs to the histone H2A family. In terms of assembly, the nucleosome is a histone octamer containing two molecules each of H2A, H2B, H3 and H4 assembled in one H3-H4 heterotetramer and two H2A-H2B heterodimers. The octamer wraps approximately 147 bp of DNA. Monoubiquitination of Lys-119 gives a specific tag for epigenetic transcriptional repression. In terms of processing, phosphorylation on Ser-2 is enhanced during mitosis. Phosphorylation on Ser-2 directly represses transcription.

It localises to the nucleus. The protein resides in the chromosome. Its function is as follows. Core component of nucleosome. Nucleosomes wrap and compact DNA into chromatin, limiting DNA accessibility to the cellular machineries which require DNA as a template. Histones thereby play a central role in transcription regulation, DNA repair, DNA replication and chromosomal stability. DNA accessibility is regulated via a complex set of post-translational modifications of histones, also called histone code, and nucleosome remodeling. The sequence is that of Histone H2A from Chironomus thummi thummi (Midge).